The primary structure comprises 99 residues: Nucleoid-associated protein SPN23F10240 (99 aa).

The protein belongs to the YbaB/EbfC family. Homodimer.

It localises to the cytoplasm. Its subcellular location is the nucleoid. Its function is as follows. Binds to DNA and alters its conformation. May be involved in regulation of gene expression, nucleoid organization and DNA protection. The sequence is that of Nucleoid-associated protein SPN23F10240 from Streptococcus pneumoniae (strain ATCC 700669 / Spain 23F-1).